Reading from the N-terminus, the 296-residue chain is Phosphate transport system permease protein PstA (296 aa).

Residues M1–R28 are Cytoplasmic-facing. Residues I29–M50 form a helical membrane-spanning segment. Residues S51 to A82 lie on the Periplasmic side of the membrane. The helical transmembrane segment at L83–I102 threads the bilayer. The region spanning L83–A286 is the ABC transmembrane type-1 domain. Over M103–D126 the chain is Cytoplasmic. The chain crosses the membrane as a helical span at residues I127–A146. Residues Q147 to H150 lie on the Periplasmic side of the membrane. A helical membrane pass occupies residues F151–I169. Over R170–K204 the chain is Cytoplasmic. A helical transmembrane segment spans residues A205–G223. Residues E224–Q266 are Periplasmic-facing. A helical membrane pass occupies residues L267–A286. Topologically, residues R287–G296 are cytoplasmic.

Belongs to the binding-protein-dependent transport system permease family. CysTW subfamily.

It localises to the cell inner membrane. In terms of biological role, part of the binding-protein-dependent transport system for phosphate; probably responsible for the translocation of the substrate across the membrane. The protein is Phosphate transport system permease protein PstA (pstA) of Escherichia coli (strain K12).